The chain runs to 629 residues: tRNA uridine 5-carboxymethylaminomethyl modification enzyme MnmG (629 aa).

13–18 (GGGHAG) serves as a coordination point for FAD. Position 273 to 287 (273 to 287 (GPRYCPSIEDKVVRF)) interacts with NAD(+).

Belongs to the MnmG family. As to quaternary structure, homodimer. Heterotetramer of two MnmE and two MnmG subunits. The cofactor is FAD.

The protein localises to the cytoplasm. Functionally, NAD-binding protein involved in the addition of a carboxymethylaminomethyl (cmnm) group at the wobble position (U34) of certain tRNAs, forming tRNA-cmnm(5)s(2)U34. The sequence is that of tRNA uridine 5-carboxymethylaminomethyl modification enzyme MnmG from Alkalilimnicola ehrlichii (strain ATCC BAA-1101 / DSM 17681 / MLHE-1).